A 197-amino-acid polypeptide reads, in one-letter code: Signal-regulatory protein delta (197 aa).

The N-terminal stretch at 1–29 (MPIPASPLHPPLPSLLLYLLLELAGVTHV) is a signal peptide. The Ig-like V-type domain occupies 31-135 (HVQQTEMSQT…IKEYQSGRGT (105 aa)). A disulfide bond links Cys-51 and Cys-117. The segment at 139–158 (VTEQNPRPPKNRPAGRAGSR) is disordered. N-linked (GlcNAc...) asparagine glycosylation occurs at Asn-174.

The protein localises to the secreted. This Homo sapiens (Human) protein is Signal-regulatory protein delta (SIRPD).